The following is a 210-amino-acid chain: LexA repressor (210 aa).

The H-T-H motif DNA-binding region spans Arg-31–Lys-51. Catalysis depends on for autocatalytic cleavage activity residues Ser-126 and Lys-163.

This sequence belongs to the peptidase S24 family. In terms of assembly, homodimer.

The enzyme catalyses Hydrolysis of Ala-|-Gly bond in repressor LexA.. In terms of biological role, represses a number of genes involved in the response to DNA damage (SOS response), including recA and lexA. In the presence of single-stranded DNA, RecA interacts with LexA causing an autocatalytic cleavage which disrupts the DNA-binding part of LexA, leading to derepression of the SOS regulon and eventually DNA repair. This chain is LexA repressor, found in Histophilus somni (strain 129Pt) (Haemophilus somnus).